A 570-amino-acid chain; its full sequence is Polypeptide N-acetylgalactosaminyltransferase 2 (570 aa).

Residues 1–6 (MRRRSR) lie on the Cytoplasmic side of the membrane. Residues 7 to 24 (MLLCFALLWVLGIAYYMY) traverse the membrane as a helical; Signal-anchor for type II membrane protein segment. The Lumenal portion of the chain corresponds to 25 to 570 (SGGGSALAAG…QWKFSLNLQQ (546 aa)). Serine 29 is a glycosylation site (O-linked (Xyl...) (chondroitin sulfate) serine). 4 disulfide bridges follow: cysteine 125-cysteine 353, cysteine 344-cysteine 422, cysteine 455-cysteine 472, and cysteine 495-cysteine 512. The tract at residues 134-239 (LPATSVVITF…ERWLEPLLER (106 aa)) is catalytic subdomain A. Residues threonine 142, aspartate 175, and arginine 200 each contribute to the substrate site. Position 223 (aspartate 223) interacts with Mn(2+). Serine 224 provides a ligand contact to substrate. A Mn(2+)-binding site is contributed by histidine 225. The segment at 299–361 (PIKTPMIAGG…PCSRVGHVFR (63 aa)) is catalytic subdomain B. Tryptophan 330 is a binding site for substrate. Histidine 358 provides a ligand contact to Mn(2+). The substrate site is built by arginine 361, histidine 364, and tyrosine 366. Positions 442 to 565 (QDIAFGALQQ…PALSQQWKFS (124 aa)) constitute a Ricin B-type lectin domain. Asparagine 515 carries N-linked (GlcNAc...) asparagine glycosylation. Serine 535 carries the phosphoserine modification. A disulfide bond links cysteine 538 and cysteine 554.

It belongs to the glycosyltransferase 2 family. GalNAc-T subfamily. The cofactor is Mn(2+). Widely expressed at high level.

Its subcellular location is the golgi apparatus. The protein resides in the golgi stack membrane. It localises to the secreted. The catalysed reaction is L-seryl-[protein] + UDP-N-acetyl-alpha-D-galactosamine = a 3-O-[N-acetyl-alpha-D-galactosaminyl]-L-seryl-[protein] + UDP + H(+). It catalyses the reaction L-threonyl-[protein] + UDP-N-acetyl-alpha-D-galactosamine = a 3-O-[N-acetyl-alpha-D-galactosaminyl]-L-threonyl-[protein] + UDP + H(+). It functions in the pathway protein modification; protein glycosylation. Its function is as follows. Catalyzes the initial reaction in O-linked oligosaccharide biosynthesis, the transfer of an N-acetyl-D-galactosamine residue to a serine or threonine residue on the protein receptor. Has a broad spectrum of substrates for peptides such as EA2, Muc5AC, Muc1a, Muc1b. Probably involved in O-linked glycosylation of the immunoglobulin A1 (IgA1) hinge region. Involved in O-linked glycosylation of APOC-III, ANGPTL3 and PLTP. It participates in the regulation of HDL-C metabolism. The sequence is that of Polypeptide N-acetylgalactosaminyltransferase 2 (Galnt2) from Mus musculus (Mouse).